The following is a 246-amino-acid chain: MADKEAKKVPSVPESLLKRRQAYAAAKAKRLKRLLAQKKFRKAQRKIIYERAKAYHKEYRHMYRQEIRMARMARKAGNYYVPAEPKLAFVIRIRGINGVSPKVRKVLQLLRLRQIFNGTFVKLNKASINMLRIVEPYIAWGYPNLKSVHDLIYKRGYGKINKKRIALTDNSLIRKRLGKLGIICMEDVIHEIYTVGKNFKVVNNFLWPFKLSSPRGGMKKKTIHFVEGGDAGNREDQINRLIRRMN.

Met-1 bears the N-acetylmethionine mark. 4 tandem repeats follow at residues 7 to 17, 18 to 28, 29 to 40, and 41 to 52. The 4 X 12 AA tandem repeats stretch occupies residues 7–52; sequence KKVPSVPESLLKRRQAYAAAKAKRLKRLLAQKKFRKAQRKIIYERA.

It belongs to the universal ribosomal protein uL30 family. Component of the large ribosomal subunit.

The protein localises to the cytoplasm. In terms of biological role, component of the large ribosomal subunit. The ribosome is a large ribonucleoprotein complex responsible for the synthesis of proteins in the cell. Binds to G-rich structures in 28S rRNA and in mRNAs. Plays a regulatory role in the translation apparatus; inhibits cell-free translation of mRNAs. The chain is Large ribosomal subunit protein uL30 (RPL7) from Gallus gallus (Chicken).